The sequence spans 368 residues: F-box only protein 28 (368 aa).

Positions 1 to 11 (MAAASEERMAE) are enriched in basic and acidic residues. The interval 1-57 (MAAASEERMAEEGGGGHGDGGSPSAIASTQRLPPPPPPQPPQPGSQAPPAPALAPDQ) is disordered. Positions 12–21 (EGGGGHGDGG) are enriched in gly residues. Residues 32 to 52 (LPPPPPPQPPQPGSQAPPAPA) show a composition bias toward pro residues. The F-box domain maps to 61-109 (NNTLVALPIVAIENILSFMSYDEISQLRLVCKRMDLVCQRMLNQGFLKV). Ser235 and Ser242 each carry phosphoserine. Phosphothreonine is present on Thr270. The disordered stretch occupies residues 328–368 (MESAVGNSSGSGQSEESPRKRKKAAEAIDSLRKSKRLRNRK). Ser344 bears the Phosphoserine mark.

In terms of assembly, part of a SCF (SKP1-cullin-F-box) protein ligase complex.

The protein localises to the chromosome. It is found in the centromere. Its subcellular location is the kinetochore. Probably recognizes and binds to some phosphorylated proteins and promotes their ubiquitination and degradation. In Bos taurus (Bovine), this protein is F-box only protein 28 (FBXO28).